We begin with the raw amino-acid sequence, 324 residues long: UDP-N-acetylenolpyruvoylglucosamine reductase (324 aa).

The FAD-binding PCMH-type domain maps to 36–203 (FRAGGLAELM…TSVLFEGYPE (168 aa)). Arg-183 is an active-site residue. The active-site Proton donor is Ser-232. Glu-302 is an active-site residue.

It belongs to the MurB family. It depends on FAD as a cofactor.

Its subcellular location is the cytoplasm. The catalysed reaction is UDP-N-acetyl-alpha-D-muramate + NADP(+) = UDP-N-acetyl-3-O-(1-carboxyvinyl)-alpha-D-glucosamine + NADPH + H(+). It participates in cell wall biogenesis; peptidoglycan biosynthesis. In terms of biological role, cell wall formation. The chain is UDP-N-acetylenolpyruvoylglucosamine reductase from Rhizobium etli (strain CIAT 652).